Consider the following 1041-residue polypeptide: Histone deacetylase complex subunit SAP130-B (1041 aa).

5 disordered regions span residues 1 to 62 (MSSQ…QEPV), 111 to 131 (KSTM…SAVP), 572 to 592 (TNQG…EPKS), 614 to 769 (TPAG…PSGA), and 806 to 852 (VLAN…DEER). Residues 18–30 (VSNSGASVGQNVQ) are compositionally biased toward polar residues. Residues 33–42 (EVAREIDVQS) show a composition bias toward basic and acidic residues. Residues 576–592 (VQTSSVSSQQASSEPKS) show a composition bias toward low complexity. The span at 614–641 (TPAGTTVMQSHSQSPGIGSSPAQGSSPR) shows a compositional bias: polar residues. The span at 707–728 (PGAADQPSAAASLPSSHHPTAA) shows a compositional bias: low complexity.

This sequence belongs to the SAP130 family.

The protein resides in the nucleus. Its function is as follows. Acts as a transcriptional repressor. The chain is Histone deacetylase complex subunit SAP130-B (sap130-b) from Xenopus laevis (African clawed frog).